The following is a 209-amino-acid chain: MIGRIRGMLIEKSPGQALVECSGLGYEIDIPYTTFFHLPETGQEVTLHTHFAVREDAQSLYGFASRLDRNLFRLLIKVNGVGPKLAVGILSGLDAQQFIRCVEARDANSLVKLPGVGKKTAERLLIEMADRIGQLEGQFVPSQPDVPTGAGAATASQAGPDPREEAEAALIALGYKPQEAAKAISKVAGPDMNSETLIRLALKNMIPAG.

The tract at residues 1–64 (MIGRIRGMLI…EDAQSLYGFA (64 aa)) is domain I. The interval 65–143 (SRLDRNLFRL…QLEGQFVPSQ (79 aa)) is domain II. A flexible linker region spans residues 144-157 (PDVPTGAGAATASQ). Residues 158–209 (AGPDPREEAEAALIALGYKPQEAAKAISKVAGPDMNSETLIRLALKNMIPAG) form a domain III region.

This sequence belongs to the RuvA family. As to quaternary structure, homotetramer. Forms an RuvA(8)-RuvB(12)-Holliday junction (HJ) complex. HJ DNA is sandwiched between 2 RuvA tetramers; dsDNA enters through RuvA and exits via RuvB. An RuvB hexamer assembles on each DNA strand where it exits the tetramer. Each RuvB hexamer is contacted by two RuvA subunits (via domain III) on 2 adjacent RuvB subunits; this complex drives branch migration. In the full resolvosome a probable DNA-RuvA(4)-RuvB(12)-RuvC(2) complex forms which resolves the HJ.

The protein resides in the cytoplasm. Its function is as follows. The RuvA-RuvB-RuvC complex processes Holliday junction (HJ) DNA during genetic recombination and DNA repair, while the RuvA-RuvB complex plays an important role in the rescue of blocked DNA replication forks via replication fork reversal (RFR). RuvA specifically binds to HJ cruciform DNA, conferring on it an open structure. The RuvB hexamer acts as an ATP-dependent pump, pulling dsDNA into and through the RuvAB complex. HJ branch migration allows RuvC to scan DNA until it finds its consensus sequence, where it cleaves and resolves the cruciform DNA. The polypeptide is Holliday junction branch migration complex subunit RuvA (Marinobacter nauticus (strain ATCC 700491 / DSM 11845 / VT8) (Marinobacter aquaeolei)).